A 153-amino-acid polypeptide reads, in one-letter code: Large ribosomal subunit protein uL15 (153 aa).

The disordered stretch occupies residues 1 to 47 (MRLHELSPAPGSRKDRKRVGRGDAGRGNYSGRGMKGQKARSGGATRP).

It belongs to the universal ribosomal protein uL15 family. Part of the 50S ribosomal subunit.

Functionally, binds to the 23S rRNA. The protein is Large ribosomal subunit protein uL15 of Dehalococcoides mccartyi (strain ATCC BAA-2100 / JCM 16839 / KCTC 5957 / BAV1).